Reading from the N-terminus, the 183-residue chain is Probable chorismate pyruvate-lyase (183 aa).

R79, L115, and E168 together coordinate substrate.

Belongs to the UbiC family.

It is found in the cytoplasm. The catalysed reaction is chorismate = 4-hydroxybenzoate + pyruvate. Its pathway is cofactor biosynthesis; ubiquinone biosynthesis. In terms of biological role, removes the pyruvyl group from chorismate, with concomitant aromatization of the ring, to provide 4-hydroxybenzoate (4HB) for the ubiquinone pathway. In Chromohalobacter salexigens (strain ATCC BAA-138 / DSM 3043 / CIP 106854 / NCIMB 13768 / 1H11), this protein is Probable chorismate pyruvate-lyase.